Here is a 336-residue protein sequence, read N- to C-terminus: Homeobox-leucine zipper protein HAT14 (336 aa).

Disordered regions lie at residues 53–141 (RSLS…PDSV) and 160–194 (SNKR…KLRL). Positions 64–81 (EDEKKKPAPRAKKSDEFR) are enriched in basic and acidic residues. Residues 120–129 (VEEEEEEEEA) show a composition bias toward acidic residues. The span at 130 to 141 (VPSMSVSPPDSV) shows a compositional bias: low complexity. Basic and acidic residues predominate over residues 160–173 (SNKRDIDDEVERSA). The homeobox DNA-binding region spans 187-246 (STRKKLRLSKDQSAFLEDSFKEHSTLNPKQKIALAKQLNLRPRQVEVWFQNRRARTKLKQ). The interval 254–275 (LKRCCESLTEENRRLQKEVKEL) is leucine-zipper.

Belongs to the HD-ZIP homeobox family. Class II subfamily.

It is found in the nucleus. Probable transcription factor. The chain is Homeobox-leucine zipper protein HAT14 (HAT14) from Arabidopsis thaliana (Mouse-ear cress).